A 185-amino-acid chain; its full sequence is Endoribonuclease YbeY (185 aa).

The Zn(2+) site is built by histidine 142, histidine 146, and histidine 152.

It belongs to the endoribonuclease YbeY family. Zn(2+) is required as a cofactor.

It localises to the cytoplasm. In terms of biological role, single strand-specific metallo-endoribonuclease involved in late-stage 70S ribosome quality control and in maturation of the 3' terminus of the 16S rRNA. The polypeptide is Endoribonuclease YbeY (Parvibaculum lavamentivorans (strain DS-1 / DSM 13023 / NCIMB 13966)).